A 410-amino-acid chain; its full sequence is Multifunctional CCA protein (410 aa).

Residues Gly8 and Arg11 each coordinate ATP. Gly8 and Arg11 together coordinate CTP. Residues Asp21 and Asp23 each contribute to the Mg(2+) site. ATP-binding residues include Arg91, Arg137, and Arg140. The CTP site is built by Arg91, Arg137, and Arg140. The HD domain maps to 228–329; the sequence is TGVHVLSVLQ…LELLQSFDVY (102 aa).

Belongs to the tRNA nucleotidyltransferase/poly(A) polymerase family. Bacterial CCA-adding enzyme type 1 subfamily. Monomer. Can also form homodimers and oligomers. Mg(2+) is required as a cofactor. Ni(2+) serves as cofactor.

It catalyses the reaction a tRNA precursor + 2 CTP + ATP = a tRNA with a 3' CCA end + 3 diphosphate. The catalysed reaction is a tRNA with a 3' CCA end + 2 CTP + ATP = a tRNA with a 3' CCACCA end + 3 diphosphate. Functionally, catalyzes the addition and repair of the essential 3'-terminal CCA sequence in tRNAs without using a nucleic acid template. Adds these three nucleotides in the order of C, C, and A to the tRNA nucleotide-73, using CTP and ATP as substrates and producing inorganic pyrophosphate. tRNA 3'-terminal CCA addition is required both for tRNA processing and repair. Also involved in tRNA surveillance by mediating tandem CCA addition to generate a CCACCA at the 3' terminus of unstable tRNAs. While stable tRNAs receive only 3'-terminal CCA, unstable tRNAs are marked with CCACCA and rapidly degraded. The protein is Multifunctional CCA protein of Pseudomonas paraeruginosa (strain DSM 24068 / PA7) (Pseudomonas aeruginosa (strain PA7)).